The primary structure comprises 733 residues: Hexamerin (733 aa).

An N-terminal signal peptide occupies residues 1 to 17; that stretch reads MKTALVLILATATLAVA. N-linked (GlcNAc...) asparagine glycosylation is found at N199, N234, and N431.

It belongs to the hemocyanin family. As to quaternary structure, homohexamer.

It is found in the secreted. Its subcellular location is the extracellular space. Its function is as follows. Larval storage protein (LSP) which may serve as a store of amino acids for synthesis of adult proteins. The chain is Hexamerin from Blaberus discoidalis (Tropical cockroach).